Reading from the N-terminus, the 201-residue chain is 3-isopropylmalate dehydratase small subunit (201 aa).

It belongs to the LeuD family. LeuD type 1 subfamily. In terms of assembly, heterodimer of LeuC and LeuD.

The enzyme catalyses (2R,3S)-3-isopropylmalate = (2S)-2-isopropylmalate. It functions in the pathway amino-acid biosynthesis; L-leucine biosynthesis; L-leucine from 3-methyl-2-oxobutanoate: step 2/4. In terms of biological role, catalyzes the isomerization between 2-isopropylmalate and 3-isopropylmalate, via the formation of 2-isopropylmaleate. In Shewanella sp. (strain MR-4), this protein is 3-isopropylmalate dehydratase small subunit.